Here is a 384-residue protein sequence, read N- to C-terminus: S-adenosylmethionine synthase (384 aa).

An ATP-binding site is contributed by histidine 15. Position 17 (aspartate 17) interacts with Mg(2+). Glutamate 43 provides a ligand contact to K(+). Residues glutamate 56 and glutamine 99 each contribute to the L-methionine site. The segment at 99 to 109 (QSPDINQGVDR) is flexible loop. ATP-binding positions include 164–166 (DAK), 230–231 (RF), aspartate 239, 245–246 (RK), alanine 262, and lysine 266. Position 239 (aspartate 239) interacts with L-methionine. Lysine 270 is a binding site for L-methionine.

Belongs to the AdoMet synthase family. Homotetramer; dimer of dimers. Mg(2+) is required as a cofactor. K(+) serves as cofactor.

The protein resides in the cytoplasm. The catalysed reaction is L-methionine + ATP + H2O = S-adenosyl-L-methionine + phosphate + diphosphate. Its pathway is amino-acid biosynthesis; S-adenosyl-L-methionine biosynthesis; S-adenosyl-L-methionine from L-methionine: step 1/1. In terms of biological role, catalyzes the formation of S-adenosylmethionine (AdoMet) from methionine and ATP. The overall synthetic reaction is composed of two sequential steps, AdoMet formation and the subsequent tripolyphosphate hydrolysis which occurs prior to release of AdoMet from the enzyme. The polypeptide is S-adenosylmethionine synthase (Enterobacter sp. (strain 638)).